A 366-amino-acid chain; its full sequence is GTP cyclohydrolase 1 type 2 homolog (366 aa).

Positions 64, 65, 102, 326, and 329 each coordinate Zn(2+).

The protein belongs to the GTP cyclohydrolase I type 2/NIF3 family. In terms of assembly, homohexamer.

This Staphylococcus aureus (strain MRSA252) protein is GTP cyclohydrolase 1 type 2 homolog.